Here is a 359-residue protein sequence, read N- to C-terminus: Histidinol-phosphate aminotransferase (359 aa).

The residue at position 217 (Lys217) is an N6-(pyridoxal phosphate)lysine.

It belongs to the class-II pyridoxal-phosphate-dependent aminotransferase family. Histidinol-phosphate aminotransferase subfamily. As to quaternary structure, homodimer. Requires pyridoxal 5'-phosphate as cofactor.

The catalysed reaction is L-histidinol phosphate + 2-oxoglutarate = 3-(imidazol-4-yl)-2-oxopropyl phosphate + L-glutamate. The protein operates within amino-acid biosynthesis; L-histidine biosynthesis; L-histidine from 5-phospho-alpha-D-ribose 1-diphosphate: step 7/9. The polypeptide is Histidinol-phosphate aminotransferase (Salmonella paratyphi A (strain ATCC 9150 / SARB42)).